Here is a 514-residue protein sequence, read N- to C-terminus: Maltose/maltodextrin transport system permease protein MalF (514 aa).

The Cytoplasmic segment spans residues 1–16 (MDVIKKKHWWQSDQLK). The helical transmembrane segment at 17–36 (WSVIGLLGLLVGYLVVLMYV) threads the bilayer. The Periplasmic segment spans residues 37 to 39 (QGE). Residues 40–57 (YLFAIMTLILSSAGLYIF) traverse the membrane as a helical segment. The Cytoplasmic segment spans residues 58-69 (ANRKTYAWRYVY). Residues 70–92 (PGLAGMGLFVLFPLVCTIAIAFT) form a helical membrane-spanning segment. Over 93 to 283 (NYSSTNQLTF…QKPFFAIFVW (191 aa)) the chain is Periplasmic. Positions 281 to 505 (FVWTVVFSVL…LLVGALAIVN (225 aa)) constitute an ABC transmembrane type-1 domain. Residues 284–306 (TVVFSVLTVVLTVAVGMVLACLV) traverse the membrane as a helical segment. At 307 to 318 (QWEALKGKAIYR) the chain is on the cytoplasmic side. Residues 319 to 341 (VLLILPYAVPSFISILIFKGLFN) form a helical membrane-spanning segment. Topologically, residues 342 to 369 (QSFGEINMMLSALFGIKPAWFSDPNTAR) are periplasmic. Residues 370–392 (AMVIIVNTWLGYPYMMILCMGLL) form a helical membrane-spanning segment. Residues 393-412 (KAIPDDLYEASAMDGAGPFQ) are Cytoplasmic-facing. Residues 413 to 435 (NFFKITLPLLIKPLTPLMIASFA) form a helical membrane-spanning segment. Topologically, residues 436-483 (FNFNNFVLIQLLTNGGPDRLGTTTPAGYTDLLVSYTYRIAFEGGGGQD) are periplasmic. Residues 484–506 (FGLAAAIATLIFLLVGALAIVNL) form a helical membrane-spanning segment. Over 507–514 (KATRMKFD) the chain is Cytoplasmic.

This sequence belongs to the binding-protein-dependent transport system permease family. MalFG subfamily. As to quaternary structure, the complex is composed of two ATP-binding proteins (MalK), two transmembrane proteins (MalG and MalF) and a solute-binding protein (MalE).

Its subcellular location is the cell inner membrane. Functionally, part of the ABC transporter complex MalEFGK involved in maltose/maltodextrin import. Probably responsible for the translocation of the substrate across the membrane. This is Maltose/maltodextrin transport system permease protein MalF (malF) from Salmonella typhi.